Consider the following 120-residue polypeptide: MFLLHEYDIFWAFLLISSVIPILAFLISGVLAPTREGPEKLSSYESGIEPIGDAWVQFRIRYYMFALVFVVFDVETVFLYPWAMSFDVLGVSVFLEALIFVLILIVGSVYAWRKGALEWS.

3 helical membrane-spanning segments follow: residues 9 to 29, 64 to 84, and 88 to 108; these read IFWA…LISG, MFAL…PWAM, and VLGV…IVGS.

Belongs to the complex I subunit 3 family. In terms of assembly, NDH is composed of at least 16 different subunits, 5 of which are encoded in the nucleus.

It is found in the plastid. It localises to the chloroplast thylakoid membrane. It carries out the reaction a plastoquinone + NADH + (n+1) H(+)(in) = a plastoquinol + NAD(+) + n H(+)(out). The enzyme catalyses a plastoquinone + NADPH + (n+1) H(+)(in) = a plastoquinol + NADP(+) + n H(+)(out). In terms of biological role, NDH shuttles electrons from NAD(P)H:plastoquinone, via FMN and iron-sulfur (Fe-S) centers, to quinones in the photosynthetic chain and possibly in a chloroplast respiratory chain. The immediate electron acceptor for the enzyme in this species is believed to be plastoquinone. Couples the redox reaction to proton translocation, and thus conserves the redox energy in a proton gradient. This is NAD(P)H-quinone oxidoreductase subunit 3, chloroplastic from Acorus calamus var. americanus (American sweet flag).